A 429-amino-acid polypeptide reads, in one-letter code: Phosphoribosylamine--glycine ligase (429 aa).

Positions 109 to 316 constitute an ATP-grasp domain; sequence KDFLARHQIP…LVELCLAAID (208 aa). ATP is bound at residue 135-196; it reads VREQGAPIVV…EEFLDGEEAS (62 aa). The tract at residues 212–234 is disordered; that stretch reads SQDHKRVGDKDTGPNTGGMGAYS. Over residues 213–223 the composition is skewed to basic and acidic residues; the sequence is QDHKRVGDKDT. The Mg(2+) site is built by E286 and N288.

It belongs to the GARS family. Mg(2+) serves as cofactor. Requires Mn(2+) as cofactor.

It carries out the reaction 5-phospho-beta-D-ribosylamine + glycine + ATP = N(1)-(5-phospho-beta-D-ribosyl)glycinamide + ADP + phosphate + H(+). It functions in the pathway purine metabolism; IMP biosynthesis via de novo pathway; N(1)-(5-phospho-D-ribosyl)glycinamide from 5-phospho-alpha-D-ribose 1-diphosphate: step 2/2. This Vibrio vulnificus (strain YJ016) protein is Phosphoribosylamine--glycine ligase.